An 897-amino-acid polypeptide reads, in one-letter code: 3'-5' exonuclease DinG (897 aa).

The 154-residue stretch at 8–161 (VVDLETTGNQ…DEDAATTAKL (154 aa)) folds into the Exonuclease domain. The Helicase ATP-binding domain occupies 241 to 496 (SKAVDQLGLT…KAIDQLEKQR (256 aa)). 276–283 (ASLGSGKS) lines the ATP pocket. A DEAH box motif is present at residues 448–451 (DEAH). Residues 703 to 883 (NIDEYVASIV…NYRQKKGDIQ (181 aa)) form the Helicase C-terminal domain.

The protein belongs to the helicase family. DinG subfamily. Type 2 sub-subfamily.

Its function is as follows. 3'-5' exonuclease. The chain is 3'-5' exonuclease DinG from Staphylococcus aureus (strain bovine RF122 / ET3-1).